Here is a 374-residue protein sequence, read N- to C-terminus: Phospho-N-acetylmuramoyl-pentapeptide-transferase (374 aa).

10 helical membrane passes run 3–23 (AVIV…PIAI), 52–72 (MGGV…HLAL), 85–105 (PTIT…VGFI), 125–145 (LLGQ…FPST), 170–190 (IPAL…VVMA), 201–221 (LDGL…LIAF), 244–264 (PLEI…FLWW), 271–291 (IFMG…MAMS), 294–314 (TILL…SVVI), and 350–370 (FWII…SEFL).

It belongs to the glycosyltransferase 4 family. MraY subfamily. Requires Mg(2+) as cofactor.

It is found in the cell membrane. It catalyses the reaction UDP-N-acetyl-alpha-D-muramoyl-L-alanyl-gamma-D-glutamyl-meso-2,6-diaminopimeloyl-D-alanyl-D-alanine + di-trans,octa-cis-undecaprenyl phosphate = di-trans,octa-cis-undecaprenyl diphospho-N-acetyl-alpha-D-muramoyl-L-alanyl-D-glutamyl-meso-2,6-diaminopimeloyl-D-alanyl-D-alanine + UMP. The protein operates within cell wall biogenesis; peptidoglycan biosynthesis. In terms of biological role, catalyzes the initial step of the lipid cycle reactions in the biosynthesis of the cell wall peptidoglycan: transfers peptidoglycan precursor phospho-MurNAc-pentapeptide from UDP-MurNAc-pentapeptide onto the lipid carrier undecaprenyl phosphate, yielding undecaprenyl-pyrophosphoryl-MurNAc-pentapeptide, known as lipid I. This is Phospho-N-acetylmuramoyl-pentapeptide-transferase from Salinispora arenicola (strain CNS-205).